The chain runs to 304 residues: Homoserine kinase (304 aa).

Residue 90 to 100 (PLARGLGSSAS) participates in ATP binding.

Belongs to the GHMP kinase family. Homoserine kinase subfamily.

The protein localises to the cytoplasm. It carries out the reaction L-homoserine + ATP = O-phospho-L-homoserine + ADP + H(+). It participates in amino-acid biosynthesis; L-threonine biosynthesis; L-threonine from L-aspartate: step 4/5. Catalyzes the ATP-dependent phosphorylation of L-homoserine to L-homoserine phosphate. This is Homoserine kinase from Staphylococcus aureus (strain JH9).